A 222-amino-acid chain; its full sequence is Ribonuclease S-3 (222 aa).

An N-terminal signal peptide occupies residues 1 to 22 (MFRLQLISAFFILLFSLSPVSA). Cysteines 38 and 44 form a disulfide. Asn50 carries an N-linked (GlcNAc...) asparagine glycan. Residue His54 is the Proton donor of the active site. Residues His54, 92-93 (QM), 109-110 (HE), and 113-114 (RH) contribute to the RNA site. 3 cysteine pairs are disulfide-bonded: Cys68–Cys117, Cys177–Cys210, and Cys193–Cys204. Glu110 is an active-site residue. The active-site Proton acceptor is the His114.

It belongs to the RNase T2 family.

The protein resides in the secreted. The protein localises to the extracellular space. It catalyses the reaction a ribonucleotidyl-ribonucleotide-RNA + H2O = a 3'-end 3'-phospho-ribonucleotide-RNA + a 5'-end dephospho-ribonucleoside-RNA + H(+). In terms of biological role, self-incompatibility (SI) is the inherited ability of a flowering plant to prevent self-fertilization by discriminating between self and non-self pollen during pollination. In many species, self-incompatibility is controlled by the single, multiallelic locus S. This chain is Ribonuclease S-3 (S3), found in Petunia hybrida (Petunia).